The sequence spans 506 residues: Ribose import ATP-binding protein RbsA (506 aa).

ABC transporter domains lie at 5–237 (VQLI…VGRP) and 249–492 (PFGA…LAIE). 37-44 (GENGAGKS) is a binding site for ATP.

This sequence belongs to the ABC transporter superfamily. Ribose importer (TC 3.A.1.2.1) family. The complex is composed of an ATP-binding protein (RbsA), two transmembrane proteins (RbsC) and a solute-binding protein (RbsB).

It is found in the cell inner membrane. It carries out the reaction D-ribose(out) + ATP + H2O = D-ribose(in) + ADP + phosphate + H(+). Part of the ABC transporter complex RbsABC involved in ribose import. Responsible for energy coupling to the transport system. This is Ribose import ATP-binding protein RbsA from Chelativorans sp. (strain BNC1).